A 172-amino-acid chain; its full sequence is MMKFKKCLLPVAMLASFTLAGCQSNADDHAADVYQTDQLNTKQETKTVNIISILPAKVAVDNSQNKRNAQAFGALIGAVAGGVIGHNVGSGSNSGTTAGAVGGGAVGAAAGSMVNDKTLVEGVSLTYKEGTKVYTSTQVGKECQFTTGLAVVITTTYNETRIQPNTKCPEKS.

Positions 1–21 are cleaved as a signal peptide; the sequence is MMKFKKCLLPVAMLASFTLAG. C22 carries N-palmitoyl cysteine lipidation. C22 carries S-diacylglycerol cysteine lipidation.

It localises to the cell membrane. This is an uncharacterized protein from Escherichia coli O157:H7.